The following is a 323-amino-acid chain: DNA-directed RNA polymerase subunit alpha (323 aa).

Residues 1–225 (MLDIAMPKIE…QYSQTIADFN (225 aa)) are alpha N-terminal domain (alpha-NTD). The tract at residues 243-323 (PADIYDTPIE…TNSSPAGIES (81 aa)) is alpha C-terminal domain (alpha-CTD).

The protein belongs to the RNA polymerase alpha chain family. Homodimer. The RNAP catalytic core consists of 2 alpha, 1 beta, 1 beta' and 1 omega subunit. When a sigma factor is associated with the core the holoenzyme is formed, which can initiate transcription.

The catalysed reaction is RNA(n) + a ribonucleoside 5'-triphosphate = RNA(n+1) + diphosphate. In terms of biological role, DNA-dependent RNA polymerase catalyzes the transcription of DNA into RNA using the four ribonucleoside triphosphates as substrates. The polypeptide is DNA-directed RNA polymerase subunit alpha (Roseiflexus castenholzii (strain DSM 13941 / HLO8)).